A 104-amino-acid polypeptide reads, in one-letter code: MKIHKGDMVLVISGPDKGAKGKVIQAFPKTEKVLVEGVNRIKKHVANSAPERGAESGGIVTQEAPIHVSNVMVLDSDGNPTRVGYRFDENGKKVRISRRNGKDI.

This sequence belongs to the universal ribosomal protein uL24 family. In terms of assembly, part of the 50S ribosomal subunit.

In terms of biological role, one of two assembly initiator proteins, it binds directly to the 5'-end of the 23S rRNA, where it nucleates assembly of the 50S subunit. One of the proteins that surrounds the polypeptide exit tunnel on the outside of the subunit. The protein is Large ribosomal subunit protein uL24 of Corynebacterium diphtheriae (strain ATCC 700971 / NCTC 13129 / Biotype gravis).